The sequence spans 353 residues: DNA integrity scanning protein DisA (353 aa).

The DAC domain maps to 6–144 (DKELMNILKI…GGIKYVLRDS (139 aa)). ATP is bound by residues Gly73, Leu91, and 104–108 (TRHRT).

It belongs to the DisA family. In terms of assembly, homooctamer. Requires Mg(2+) as cofactor.

The catalysed reaction is 2 ATP = 3',3'-c-di-AMP + 2 diphosphate. Participates in a DNA-damage check-point that is active prior to asymmetric division when DNA is damaged. DisA forms globular foci that rapidly scan along the chromosomes during sporulation, searching for lesions. When a lesion is present, DisA pauses at the lesion site. This triggers a cellular response that culminates in a temporary block in sporulation initiation. In terms of biological role, also has diadenylate cyclase activity, catalyzing the condensation of 2 ATP molecules into cyclic di-AMP (c-di-AMP). c-di-AMP acts as a signaling molecule that couples DNA integrity with progression of sporulation. The rise in c-di-AMP level generated by DisA while scanning the chromosome, operates as a positive signal that advances sporulation; upon encountering a lesion, the DisA focus arrests at the damaged site and halts c-di-AMP synthesis. This chain is DNA integrity scanning protein DisA, found in Clostridium botulinum (strain 657 / Type Ba4).